The primary structure comprises 305 residues: Flavin-dependent thymidylate synthase (305 aa).

Residues 50 to 261 (GFVRLIDYLG…PCATASFENH (212 aa)) enclose the ThyX domain. FAD-binding positions include Ser-96, 119-121 (RHR), and Glu-127. Residues 116-119 (QWMR), 127-131 (EVSSR), and Arg-200 contribute to the dUMP site. The ThyX motif motif lies at 119–129 (RHRTARISEVS). Residues 216–218 (DLH) and His-222 contribute to the FAD site. Residue Arg-227 participates in dUMP binding. Arg-227 acts as the Involved in ionization of N3 of dUMP, leading to its activation in catalysis.

Belongs to the thymidylate synthase ThyX family. Homotetramer. FAD serves as cofactor.

The catalysed reaction is dUMP + (6R)-5,10-methylene-5,6,7,8-tetrahydrofolate + NADPH + H(+) = dTMP + (6S)-5,6,7,8-tetrahydrofolate + NADP(+). It functions in the pathway pyrimidine metabolism; dTTP biosynthesis. Functionally, catalyzes the reductive methylation of 2'-deoxyuridine-5'-monophosphate (dUMP) to 2'-deoxythymidine-5'-monophosphate (dTMP) while utilizing 5,10-methylenetetrahydrofolate (mTHF) as the methyl donor, and NADPH and FADH(2) as the reductant. The sequence is that of Flavin-dependent thymidylate synthase from Treponema pallidum (strain Nichols).